A 253-amino-acid polypeptide reads, in one-letter code: Tryptophan synthase alpha chain (253 aa).

Catalysis depends on proton acceptor residues E48 and D59.

The protein belongs to the TrpA family. In terms of assembly, tetramer of two alpha and two beta chains.

The catalysed reaction is (1S,2R)-1-C-(indol-3-yl)glycerol 3-phosphate + L-serine = D-glyceraldehyde 3-phosphate + L-tryptophan + H2O. The protein operates within amino-acid biosynthesis; L-tryptophan biosynthesis; L-tryptophan from chorismate: step 5/5. Functionally, the alpha subunit is responsible for the aldol cleavage of indoleglycerol phosphate to indole and glyceraldehyde 3-phosphate. The sequence is that of Tryptophan synthase alpha chain from Caldicellulosiruptor saccharolyticus (strain ATCC 43494 / DSM 8903 / Tp8T 6331).